Consider the following 297-residue polypeptide: Formylmethanofuran--tetrahydromethanopterin formyltransferase (297 aa).

The protein belongs to the FTR family. Homotetramer.

It is found in the cytoplasm. It carries out the reaction N-formylmethanofuran + 5,6,7,8-tetrahydromethanopterin + H(+) = N(5)-formyl-5,6,7,8-tetrahydromethanopterin + methanofuran. Its pathway is one-carbon metabolism; methanogenesis from CO(2); 5,10-methenyl-5,6,7,8-tetrahydromethanopterin from CO(2): step 2/3. Catalyzes the reversible transfer of a formyl group from formylmethanofuran (formyl-MFR) to tetrahydromethanopterin (H(4)MPT) to produce 5-formyl tetrahydromethanopterin (5-formyl-H(4)MPT) and methanofuran (MFR). The sequence is that of Formylmethanofuran--tetrahydromethanopterin formyltransferase from Methanosarcina acetivorans (strain ATCC 35395 / DSM 2834 / JCM 12185 / C2A).